We begin with the raw amino-acid sequence, 112 residues long: Small ribosomal subunit protein bS6 (112 aa).

The protein belongs to the bacterial ribosomal protein bS6 family.

Its function is as follows. Binds together with bS18 to 16S ribosomal RNA. This chain is Small ribosomal subunit protein bS6, found in Legionella pneumophila (strain Paris).